Reading from the N-terminus, the 375-residue chain is Chaperone protein DnaJ (375 aa).

Positions 5–70 constitute a J domain; the sequence is DYYEVLGVER…GKRSAYDQYG (66 aa). The segment at 134 to 212 adopts a CR-type zinc-finger fold; it reads GTTVTIRVPT…CHGQGRVEES (79 aa). Zn(2+) is bound by residues cysteine 147, cysteine 150, cysteine 164, cysteine 167, cysteine 186, cysteine 189, cysteine 200, and cysteine 203. CXXCXGXG motif repeat units lie at residues 147-154, 164-171, 186-193, and 200-207; these read CKTCDGTG, CTTCGGIG, CPRCHGSG, and CGSCHGQG.

The protein belongs to the DnaJ family. Homodimer. It depends on Zn(2+) as a cofactor.

The protein localises to the cytoplasm. Functionally, participates actively in the response to hyperosmotic and heat shock by preventing the aggregation of stress-denatured proteins and by disaggregating proteins, also in an autonomous, DnaK-independent fashion. Unfolded proteins bind initially to DnaJ; upon interaction with the DnaJ-bound protein, DnaK hydrolyzes its bound ATP, resulting in the formation of a stable complex. GrpE releases ADP from DnaK; ATP binding to DnaK triggers the release of the substrate protein, thus completing the reaction cycle. Several rounds of ATP-dependent interactions between DnaJ, DnaK and GrpE are required for fully efficient folding. Also involved, together with DnaK and GrpE, in the DNA replication of plasmids through activation of initiation proteins. The chain is Chaperone protein DnaJ from Ectopseudomonas mendocina (strain ymp) (Pseudomonas mendocina).